The chain runs to 458 residues: ATP synthase subunit beta (458 aa).

148-155 (GGAGVGKT) contacts ATP.

This sequence belongs to the ATPase alpha/beta chains family. In terms of assembly, F-type ATPases have 2 components, CF(1) - the catalytic core - and CF(0) - the membrane proton channel. CF(1) has five subunits: alpha(3), beta(3), gamma(1), delta(1), epsilon(1). CF(0) has three main subunits: a(1), b(2) and c(9-12). The alpha and beta chains form an alternating ring which encloses part of the gamma chain. CF(1) is attached to CF(0) by a central stalk formed by the gamma and epsilon chains, while a peripheral stalk is formed by the delta and b chains.

It is found in the cell inner membrane. The catalysed reaction is ATP + H2O + 4 H(+)(in) = ADP + phosphate + 5 H(+)(out). Its function is as follows. Produces ATP from ADP in the presence of a proton gradient across the membrane. The catalytic sites are hosted primarily by the beta subunits. In Laribacter hongkongensis (strain HLHK9), this protein is ATP synthase subunit beta.